We begin with the raw amino-acid sequence, 546 residues long: Probable malate:quinone oxidoreductase (546 aa).

This sequence belongs to the MQO family. The cofactor is FAD.

It carries out the reaction (S)-malate + a quinone = a quinol + oxaloacetate. It participates in carbohydrate metabolism; tricarboxylic acid cycle; oxaloacetate from (S)-malate (quinone route): step 1/1. This is Probable malate:quinone oxidoreductase from Acinetobacter baumannii (strain ACICU).